Consider the following 249-residue polypeptide: uncharacterized protein (249 aa).

The region spanning 7–64 is the S4 RNA-binding domain; the sequence is PRVHVFLAEKGVGSRRFCEELIRKKLVRVNNTIAKLGDKVTLGDRIIYKKQIFVFKDF. The active-site Nucleophile is the Asp112.

This sequence belongs to the pseudouridine synthase RsuA family.

The catalysed reaction is a uridine in RNA = a pseudouridine in RNA. This is an uncharacterized protein from Borreliella burgdorferi (strain ATCC 35210 / DSM 4680 / CIP 102532 / B31) (Borrelia burgdorferi).